We begin with the raw amino-acid sequence, 283 residues long: Pantothenate synthetase (283 aa).

An ATP-binding site is contributed by 30 to 37 (MGYLHEGH). His37 functions as the Proton donor in the catalytic mechanism. A (R)-pantoate-binding site is contributed by Gln61. Residue Gln61 participates in beta-alanine binding. 147–150 (GQKD) is a binding site for ATP. (R)-pantoate is bound at residue Gln153. ATP-binding positions include Val176 and 184–187 (LSSR).

The protein belongs to the pantothenate synthetase family. In terms of assembly, homodimer.

The protein resides in the cytoplasm. It carries out the reaction (R)-pantoate + beta-alanine + ATP = (R)-pantothenate + AMP + diphosphate + H(+). Its pathway is cofactor biosynthesis; (R)-pantothenate biosynthesis; (R)-pantothenate from (R)-pantoate and beta-alanine: step 1/1. Catalyzes the condensation of pantoate with beta-alanine in an ATP-dependent reaction via a pantoyl-adenylate intermediate. The polypeptide is Pantothenate synthetase (Moorella thermoacetica (strain ATCC 39073 / JCM 9320)).